Reading from the N-terminus, the 328-residue chain is Cytochrome c biogenesis protein CcsA (328 aa).

Transmembrane regions (helical) follow at residues 13–33 (ISFSVVLIVMTIYFLTLLVNL), 46–66 (GIVITFFSITGFLFTRWIYSG), 73–93 (LYESLIFLSWAFSIIHMVSYF), 101–121 (LNAITAPSAIFIQGFATSGLL), 146–166 (MVLGYGALLCGSLLSIALLVI), 234–254 (IISLGFLFLTMGILSGAVWAN), 263–283 (WDPKETWAFITWTIFAIYLHI), and 295–315 (AIVASIGFLVIWICYFGVNLL).

It belongs to the CcmF/CycK/Ccl1/NrfE/CcsA family. As to quaternary structure, may interact with Ccs1.

The protein resides in the plastid. It is found in the chloroplast thylakoid membrane. Required during biogenesis of c-type cytochromes (cytochrome c6 and cytochrome f) at the step of heme attachment. This is Cytochrome c biogenesis protein CcsA from Aethionema cordifolium (Lebanon stonecress).